Reading from the N-terminus, the 197-residue chain is Guanylate kinase (197 aa).

The Guanylate kinase-like domain maps to 7-185; it reads GLIIILSSPS…TLKKIHEIIV (179 aa). 14 to 21 provides a ligand contact to ATP; that stretch reads SPSGTGKS.

It belongs to the guanylate kinase family.

It localises to the cytoplasm. It catalyses the reaction GMP + ATP = GDP + ADP. Its function is as follows. Essential for recycling GMP and indirectly, cGMP. The chain is Guanylate kinase from Rickettsia typhi (strain ATCC VR-144 / Wilmington).